Reading from the N-terminus, the 62-residue chain is Photosystem II reaction center protein Z (62 aa).

The next 2 helical transmembrane spans lie at 8–28 and 41–61; these read LVLL…VVLA and YTGA…NSLV.

It belongs to the PsbZ family. As to quaternary structure, PSII is composed of 1 copy each of membrane proteins PsbA, PsbB, PsbC, PsbD, PsbE, PsbF, PsbH, PsbI, PsbJ, PsbK, PsbL, PsbM, PsbT, PsbX, PsbY, PsbZ, Psb30/Ycf12, at least 3 peripheral proteins of the oxygen-evolving complex and a large number of cofactors. It forms dimeric complexes.

The protein resides in the plastid. It localises to the chloroplast thylakoid membrane. May control the interaction of photosystem II (PSII) cores with the light-harvesting antenna, regulates electron flow through the 2 photosystem reaction centers. PSII is a light-driven water plastoquinone oxidoreductase, using light energy to abstract electrons from H(2)O, generating a proton gradient subsequently used for ATP formation. This chain is Photosystem II reaction center protein Z, found in Pyropia yezoensis (Susabi-nori).